The following is a 309-amino-acid chain: GalNAc(5)-diNAcBac-PP-undecaprenol beta-1,3-glucosyltransferase (309 aa).

A helical membrane pass occupies residues 273–291 (SLSIKINAPALILLILSII).

This sequence belongs to the glycosyltransferase 2 family.

Its subcellular location is the membrane. It catalyses the reaction [alpha-D-GalNAc-(1-&gt;4)]4-alpha-D-GalNAc-(1-&gt;3)-alpha-D-diNAcBac-tri-trans,hepta-cis-undecaprenyl diphosphate + UDP-alpha-D-glucose = [alpha-D-GalNAc-(1-&gt;4)]2-[beta-D-Glc-(1-&gt;3)]-[alpha-D-GalNAc-(1-&gt;4)]2-alpha-D-GalNAc-(1-&gt;3)-alpha-D-diNAcBac-tri-trans,hepta-cis-undecaprenyl diphosphate + UDP + H(+). Its pathway is protein modification; protein glycosylation. Its function is as follows. Glucosyltransferase that adds he final branching glucose to complete the final heptasaccharide structure in the N-linked protein glycosylation pathway. This is GalNAc(5)-diNAcBac-PP-undecaprenol beta-1,3-glucosyltransferase (pglI) from Campylobacter jejuni subsp. jejuni serotype O:2 (strain ATCC 700819 / NCTC 11168).